The chain runs to 649 residues: Acetylcholinesterase (649 aa).

An N-terminal signal peptide occupies residues 1-38 (MAISCRQSRVLPMSLPLPLTIPLPLVLVLSLHLSGVCG). C104 and C131 are joined by a disulfide. N-linked (GlcNAc...) asparagine glycosylation is found at N126 and N174. The active-site Acyl-ester intermediate is the S276. The cysteines at positions 330 and 345 are disulfide-linked. N331 carries N-linked (GlcNAc...) asparagine glycosylation. Residues E405 and H518 each act as charge relay system in the active site. C480 and C598 form a disulfide bridge. A glycan (N-linked (GlcNAc...) asparagine) is linked at N531. A lipid anchor (GPI-anchor amidated serine) is attached at S619. The propeptide at 620-649 (GSASISPRLQLLGIAALIYICAALRTKRVF) is removed in mature form.

This sequence belongs to the type-B carboxylesterase/lipase family. As to quaternary structure, homodimer; disulfide-linked. The active unit is formed by non-covalent association of the 55 kDa and 16 kDa subunits. In terms of processing, proteolytic cleavage into the 16 kDa subunit and the 55 kDa subunits originates from the hydrophilic peptide, aa 148-180, and is associated with excretion out of the cell. Post-translationally, neither N-glycosylation nor dimerization is required for enzyme activity or substrate specificity, but protects the protein against proteolytic digestion.

The protein localises to the synapse. The protein resides in the cell membrane. The catalysed reaction is acetylcholine + H2O = choline + acetate + H(+). Functionally, rapidly hydrolyzes choline released into the synapse. It can hydrolyze butyrylthiocholine. This chain is Acetylcholinesterase (Ace), found in Drosophila melanogaster (Fruit fly).